Here is a 139-residue protein sequence, read N- to C-terminus: Ribonuclease P protein component (139 aa).

Belongs to the RnpA family. In terms of assembly, consists of a catalytic RNA component (M1 or rnpB) and a protein subunit.

It catalyses the reaction Endonucleolytic cleavage of RNA, removing 5'-extranucleotides from tRNA precursor.. RNaseP catalyzes the removal of the 5'-leader sequence from pre-tRNA to produce the mature 5'-terminus. It can also cleave other RNA substrates such as 4.5S RNA. The protein component plays an auxiliary but essential role in vivo by binding to the 5'-leader sequence and broadening the substrate specificity of the ribozyme. This is Ribonuclease P protein component from Paraburkholderia xenovorans (strain LB400).